A 370-amino-acid polypeptide reads, in one-letter code: Aminomethyltransferase (370 aa).

Belongs to the GcvT family. In terms of assembly, the glycine cleavage system is composed of four proteins: P, T, L and H.

It carries out the reaction N(6)-[(R)-S(8)-aminomethyldihydrolipoyl]-L-lysyl-[protein] + (6S)-5,6,7,8-tetrahydrofolate = N(6)-[(R)-dihydrolipoyl]-L-lysyl-[protein] + (6R)-5,10-methylene-5,6,7,8-tetrahydrofolate + NH4(+). Its function is as follows. The glycine cleavage system catalyzes the degradation of glycine. The sequence is that of Aminomethyltransferase from Prochlorococcus marinus (strain MIT 9301).